The primary structure comprises 62 residues: Large ribosomal subunit protein uL30 (62 aa).

The protein belongs to the universal ribosomal protein uL30 family. As to quaternary structure, part of the 50S ribosomal subunit.

The chain is Large ribosomal subunit protein uL30 from Alkalilimnicola ehrlichii (strain ATCC BAA-1101 / DSM 17681 / MLHE-1).